A 166-amino-acid polypeptide reads, in one-letter code: Transcription factor HES-5 (166 aa).

The region spanning Lys-16–Ser-72 is the bHLH domain. The Orange domain maps to Tyr-88 to Phe-119. Positions Pro-125–Trp-166 are disordered. The segment covering Ala-142 to Arg-156 has biased composition (low complexity). The WRPW motif signature appears at Trp-163–Trp-166.

In terms of assembly, transcription repression requires formation of a complex with a corepressor protein of the Groucho/TLE family. In terms of tissue distribution, expressed predominantly in embryonic neural lineage cells.

It is found in the nucleus. Its function is as follows. Transcriptional repressor of genes that require a bHLH protein for their transcription. Plays an important role as neurogenesis negative regulator. In Rattus norvegicus (Rat), this protein is Transcription factor HES-5 (Hes5).